We begin with the raw amino-acid sequence, 243 residues long: MLTFLIPTAKEMKPVPPCYPHQLPQKSLPILEAMAELSLEELARAYSIRIEAASKEAKRLKAIAQGQSSAYPAYQLFNGLMYRHLKRDNLSKDQQDYLSKQVYITSSFYGIIPTDEKIAEHRHDFHTKVTINGQSLKHYWRPIYDQFAKDHKQIISLLSNEFRDVFSKEYQKLWISPKFMEERSGQLKTHSTISKKARGAFLTACLENNVQTKEALKQLSFAGFCYNEELSTETNYYYIKKES.

The protein belongs to the UPF0246 family.

The polypeptide is UPF0246 protein SEQ_2141 (Streptococcus equi subsp. equi (strain 4047)).